Reading from the N-terminus, the 659-residue chain is Interferon-induced GTP-binding protein Mx1 (659 aa).

Met1 carries the post-translational modification N-acetylmethionine. The segment at 1–40 (MVNSKGEITDSDPGSNHLLLNGLPDKAGKNQDTEPENSLC) is disordered. Residues 65–338 (DLALPAIAVI…LITHICKTLP (274 aa)) enclose the Dynamin-type G domain. Residues 75-82 (GDQSSGKS) form a G1 motif region. GTP is bound at residue 75–82 (GDQSSGKS). The tract at residues 100 to 102 (VTR) is G2 motif. Residues 176–179 (DLPG) form a G3 motif region. GTP-binding positions include 176 to 180 (DLPGI) and 245 to 248 (TKPD). Residues 245–248 (TKPD) are G4 motif. Positions 277–280 (KCRG) are G5 motif. Residues 339-364 (LLENQIKENHEKITEELKKYGSDVPE) form a bundle signaling element (BSE) region. Residues 364-531 (EEEHEKMFFL…HFQMEQIVYC (168 aa)) are middle domain. The stalk stretch occupies residues 365–629 (EEHEKMFFLI…KDTYNWLLKE (265 aa)). The critical for lipid-binding stretch occupies residues 552-555 (KNKK). A GED domain is found at 571–659 (LSEIFEHLLA…ARRRLAKFPG (89 aa)).

Belongs to the TRAFAC class dynamin-like GTPase superfamily. Dynamin/Fzo/YdjA family. Homooligomer. Oligomerizes into multimeric filamentous or ring-like structures by virtue of its stalk domain. Oligomerization is critical for GTPase activity, protein stability, and recognition of viral target structures. Interacts with TRPC1, TRPC3, TRPC4, TRPC5, TRPC6 and TRPC7. Interacts with HSPA5. Interacts with TUBB/TUBB5. Interacts with DDX39A and DDX39B. ISGylated.

It is found in the cytoplasm. The protein localises to the endoplasmic reticulum membrane. The protein resides in the perinuclear region. Its function is as follows. Interferon-induced dynamin-like GTPase with antiviral activity. In Phoca vitulina (Harbor seal), this protein is Interferon-induced GTP-binding protein Mx1 (MX1).